Consider the following 127-residue polypeptide: Aspartate 1-decarboxylase (127 aa).

Serine 25 functions as the Schiff-base intermediate with substrate; via pyruvic acid in the catalytic mechanism. Serine 25 is modified (pyruvic acid (Ser)). Threonine 57 serves as a coordination point for substrate. Tyrosine 58 functions as the Proton donor in the catalytic mechanism. 73–75 provides a ligand contact to substrate; that stretch reads GAA.

Belongs to the PanD family. As to quaternary structure, heterooctamer of four alpha and four beta subunits. The cofactor is pyruvate. Is synthesized initially as an inactive proenzyme, which is activated by self-cleavage at a specific serine bond to produce a beta-subunit with a hydroxyl group at its C-terminus and an alpha-subunit with a pyruvoyl group at its N-terminus.

The protein localises to the cytoplasm. The enzyme catalyses L-aspartate + H(+) = beta-alanine + CO2. The protein operates within cofactor biosynthesis; (R)-pantothenate biosynthesis; beta-alanine from L-aspartate: step 1/1. Its function is as follows. Catalyzes the pyruvoyl-dependent decarboxylation of aspartate to produce beta-alanine. This chain is Aspartate 1-decarboxylase, found in Clostridium botulinum (strain Loch Maree / Type A3).